The sequence spans 147 residues: MNCLLLGRGFLHRFHPFRPVLCEDSASAATTITSQFKLNYRQIFIGSSLGLAAGFALGKLGRLFIVACSAVFATIAYINSKGLIRINWPQLQQQVIGPTEQYTGFHFPSSGRFNTQSTFPTIRNWICTNPNFKLSFFSAMYVGFVSS.

A helical transmembrane segment spans residues Leu-63–Asn-79.

It belongs to the FUN14 family.

The protein localises to the membrane. This is an uncharacterized protein from Schizosaccharomyces pombe (strain 972 / ATCC 24843) (Fission yeast).